Reading from the N-terminus, the 328-residue chain is MHNAIYTGLQKEVEVILATPRGFCAGVSRAIEIVKLAIEYYKDTKTIYVLHEIVHNKYIVETLKTMGVIFIDKVDQAQDGSVLIYSAHGVSKSIKQLAELRDLEVIDATCPLVNKVHKEVQLYDKSGYQVILIGHKGHREVEGTVGQISTPVIIVQNLNDIDKIEIFDPDKLAYVTQTTLSVDDTKVIIDKLKKKFPNIKGPDLKDICYATQNRQTTTKRLAELVDIVFILGSKNSSNSNRLKELAAIQTQAFLIDSYKEIDLNLLNDITKIGITAGASAPDILVQQVIDFLKQHMKVKLSDLEIVQESVTFNVPRQLRQYKEQYNPI.

Position 24 (Cys-24) interacts with [4Fe-4S] cluster. The (2E)-4-hydroxy-3-methylbut-2-enyl diphosphate site is built by His-55 and His-88. Dimethylallyl diphosphate is bound by residues His-55 and His-88. Isopentenyl diphosphate contacts are provided by His-55 and His-88. Cys-110 lines the [4Fe-4S] cluster pocket. His-138 contacts (2E)-4-hydroxy-3-methylbut-2-enyl diphosphate. Residue His-138 coordinates dimethylallyl diphosphate. An isopentenyl diphosphate-binding site is contributed by His-138. Residue Glu-140 is the Proton donor of the active site. A (2E)-4-hydroxy-3-methylbut-2-enyl diphosphate-binding site is contributed by Thr-178. Residue Cys-208 participates in [4Fe-4S] cluster binding. (2E)-4-hydroxy-3-methylbut-2-enyl diphosphate contacts are provided by Ser-236, Ser-237, Asn-238, and Ser-279. Residues Ser-236, Ser-237, Asn-238, and Ser-279 each contribute to the dimethylallyl diphosphate site. Isopentenyl diphosphate is bound by residues Ser-236, Ser-237, Asn-238, and Ser-279.

It belongs to the IspH family. It depends on [4Fe-4S] cluster as a cofactor.

It catalyses the reaction isopentenyl diphosphate + 2 oxidized [2Fe-2S]-[ferredoxin] + H2O = (2E)-4-hydroxy-3-methylbut-2-enyl diphosphate + 2 reduced [2Fe-2S]-[ferredoxin] + 2 H(+). It carries out the reaction dimethylallyl diphosphate + 2 oxidized [2Fe-2S]-[ferredoxin] + H2O = (2E)-4-hydroxy-3-methylbut-2-enyl diphosphate + 2 reduced [2Fe-2S]-[ferredoxin] + 2 H(+). The protein operates within isoprenoid biosynthesis; dimethylallyl diphosphate biosynthesis; dimethylallyl diphosphate from (2E)-4-hydroxy-3-methylbutenyl diphosphate: step 1/1. Its pathway is isoprenoid biosynthesis; isopentenyl diphosphate biosynthesis via DXP pathway; isopentenyl diphosphate from 1-deoxy-D-xylulose 5-phosphate: step 6/6. Its function is as follows. Catalyzes the conversion of 1-hydroxy-2-methyl-2-(E)-butenyl 4-diphosphate (HMBPP) into a mixture of isopentenyl diphosphate (IPP) and dimethylallyl diphosphate (DMAPP). Acts in the terminal step of the DOXP/MEP pathway for isoprenoid precursor biosynthesis. This Ehrlichia ruminantium (strain Gardel) protein is 4-hydroxy-3-methylbut-2-enyl diphosphate reductase.